The chain runs to 89 residues: Cell division topological specificity factor (89 aa).

This sequence belongs to the MinE family.

In terms of biological role, prevents the cell division inhibition by proteins MinC and MinD at internal division sites while permitting inhibition at polar sites. This ensures cell division at the proper site by restricting the formation of a division septum at the midpoint of the long axis of the cell. The sequence is that of Cell division topological specificity factor from Photorhabdus laumondii subsp. laumondii (strain DSM 15139 / CIP 105565 / TT01) (Photorhabdus luminescens subsp. laumondii).